Consider the following 476-residue polypeptide: Viral inhibitor of caspase-8-induced apoptosis (476 aa).

The protein belongs to the herpesviridae US22 family. As to quaternary structure, interacts with host pro-caspase-8/CASP8; this interaction inhibits CASP8 activation.

In terms of biological role, plays a role in the inhibition of apoptosis by interacting with the pro-domain of pro-caspase-8/CASP8 and thus preventing its activation. This is Viral inhibitor of caspase-8-induced apoptosis (UL36) from Human cytomegalovirus (strain Merlin) (HHV-5).